We begin with the raw amino-acid sequence, 243 residues long: Pyridoxine 5'-phosphate synthase (243 aa).

Asparagine 9 is a 3-amino-2-oxopropyl phosphate binding site. Residue 11-12 (DH) coordinates 1-deoxy-D-xylulose 5-phosphate. Position 20 (arginine 20) interacts with 3-amino-2-oxopropyl phosphate. Histidine 45 (proton acceptor) is an active-site residue. 1-deoxy-D-xylulose 5-phosphate-binding residues include arginine 47 and histidine 52. Residue glutamate 72 is the Proton acceptor of the active site. Threonine 102 lines the 1-deoxy-D-xylulose 5-phosphate pocket. The Proton donor role is filled by histidine 193. Residues glycine 194 and 215 to 216 (GH) contribute to the 3-amino-2-oxopropyl phosphate site.

The protein belongs to the PNP synthase family. Homooctamer; tetramer of dimers.

It is found in the cytoplasm. It catalyses the reaction 3-amino-2-oxopropyl phosphate + 1-deoxy-D-xylulose 5-phosphate = pyridoxine 5'-phosphate + phosphate + 2 H2O + H(+). The protein operates within cofactor biosynthesis; pyridoxine 5'-phosphate biosynthesis; pyridoxine 5'-phosphate from D-erythrose 4-phosphate: step 5/5. In terms of biological role, catalyzes the complicated ring closure reaction between the two acyclic compounds 1-deoxy-D-xylulose-5-phosphate (DXP) and 3-amino-2-oxopropyl phosphate (1-amino-acetone-3-phosphate or AAP) to form pyridoxine 5'-phosphate (PNP) and inorganic phosphate. The polypeptide is Pyridoxine 5'-phosphate synthase (Escherichia coli O157:H7).